The sequence spans 562 residues: Formate--tetrahydrofolate ligase (562 aa).

ATP is bound at residue 77 to 84; it reads TPAGEGKS.

Belongs to the formate--tetrahydrofolate ligase family.

The enzyme catalyses (6S)-5,6,7,8-tetrahydrofolate + formate + ATP = (6R)-10-formyltetrahydrofolate + ADP + phosphate. It participates in one-carbon metabolism; tetrahydrofolate interconversion. The sequence is that of Formate--tetrahydrofolate ligase from Corynebacterium jeikeium (strain K411).